A 224-amino-acid chain; its full sequence is UPF0758 protein VS_0182 (224 aa).

The interval 1–21 (MPISKMPVESMPREKLLSRGP) is disordered. The MPN domain maps to 102–224 (ALTSPSHTKL…VISFAERGWI (123 aa)). Positions 173, 175, and 186 each coordinate Zn(2+). Residues 173–186 (HNHPSGVAEPSQAD) carry the JAMM motif motif.

Belongs to the UPF0758 family.

This Vibrio atlanticus (strain LGP32) (Vibrio splendidus (strain Mel32)) protein is UPF0758 protein VS_0182.